The following is a 506-amino-acid chain: Peptidyl-prolyl cis-trans isomerase CYP59 (506 aa).

Residues 1–161 (MSVLIVTSLG…KNIRIKHTHI (161 aa)) form the PPIase cyclophilin-type domain. The RRM domain occupies 243–321 (NVLFVCKLNP…RRIHVDFSQS (79 aa)). Residues 341-357 (GCFKCGSTDHIAKDCVG) form a CCHC-type zinc finger. 2 stretches are compositionally biased toward basic and acidic residues: residues 388 to 404 (ETPK…EKIQ) and 412 to 506 (GEGK…RRDR). Residues 388-506 (ETPKHNSHER…REARHERRDR (119 aa)) form a disordered region.

The protein belongs to the cyclophilin-type PPIase family. Component of the BZR1 complex. Interacts with NRPB1 (via CTD domain), SCL28, SCL30, SCL30A, SCL33, SC35, SR30, SR34, RSZ21, RS2Z33, RS31 and RS40. Ubiquitous.

It localises to the nucleus. The enzyme catalyses [protein]-peptidylproline (omega=180) = [protein]-peptidylproline (omega=0). In terms of biological role, PPIases accelerate the folding of proteins. It catalyzes the cis-trans isomerization of proline imidic peptide bonds in oligopeptides. Influences somehow regulation of RNA pol II (CTD) phosphorylation. Binds RNA with preferences for GC-rich sequences. Probably involved in activities connecting transcription and pre-mRNA processing. Involved in brassinostroid response. The protein is Peptidyl-prolyl cis-trans isomerase CYP59 (CYP59) of Arabidopsis thaliana (Mouse-ear cress).